We begin with the raw amino-acid sequence, 232 residues long: 5'-methylthioadenosine/S-adenosylhomocysteine nucleosidase (232 aa).

The Proton acceptor role is filled by Glu-12. Residues Gly-78, Ile-152, and 173-174 (ME) contribute to the substrate site. Catalysis depends on Asp-197, which acts as the Proton donor.

This sequence belongs to the PNP/UDP phosphorylase family. MtnN subfamily. Homodimer.

It catalyses the reaction S-adenosyl-L-homocysteine + H2O = S-(5-deoxy-D-ribos-5-yl)-L-homocysteine + adenine. It carries out the reaction S-methyl-5'-thioadenosine + H2O = 5-(methylsulfanyl)-D-ribose + adenine. The enzyme catalyses 5'-deoxyadenosine + H2O = 5-deoxy-D-ribose + adenine. It functions in the pathway amino-acid biosynthesis; L-methionine biosynthesis via salvage pathway; S-methyl-5-thio-alpha-D-ribose 1-phosphate from S-methyl-5'-thioadenosine (hydrolase route): step 1/2. In terms of biological role, catalyzes the irreversible cleavage of the glycosidic bond in both 5'-methylthioadenosine (MTA) and S-adenosylhomocysteine (SAH/AdoHcy) to adenine and the corresponding thioribose, 5'-methylthioribose and S-ribosylhomocysteine, respectively. Also cleaves 5'-deoxyadenosine, a toxic by-product of radical S-adenosylmethionine (SAM) enzymes, into 5-deoxyribose and adenine. Thus, is required for in vivo function of the radical SAM enzymes biotin synthase and lipoic acid synthase, that are inhibited by 5'-deoxyadenosine accumulation. This is 5'-methylthioadenosine/S-adenosylhomocysteine nucleosidase from Edwardsiella ictaluri (strain 93-146).